Here is a 260-residue protein sequence, read N- to C-terminus: 3'-5' ssDNA/RNA exonuclease TatD (260 aa).

A divalent metal cation contacts are provided by E92, H128, and H153.

The protein belongs to the metallo-dependent hydrolases superfamily. TatD-type hydrolase family. TatD subfamily. In terms of assembly, monomer. The cofactor is Mg(2+).

It localises to the cytoplasm. Its function is as follows. 3'-5' exonuclease that prefers single-stranded DNA and RNA. May play a role in the H(2)O(2)-induced DNA damage repair. This chain is 3'-5' ssDNA/RNA exonuclease TatD, found in Yersinia pseudotuberculosis serotype O:3 (strain YPIII).